The sequence spans 340 residues: Selenide, water dikinase (340 aa).

Sec17 is a catalytic residue. Position 17 (Sec17) is a non-standard amino acid, selenocysteine. Residues Lys20 and 45-47 (NNE) contribute to the ATP site. Residue Asp48 participates in Mg(2+) binding. ATP contacts are provided by residues Asp65, Asp88, and 136–138 (GHT). Asp88 contacts Mg(2+). A Mg(2+)-binding site is contributed by Asp224.

Belongs to the selenophosphate synthase 1 family. Class I subfamily. Homodimer. It depends on Mg(2+) as a cofactor.

The enzyme catalyses hydrogenselenide + ATP + H2O = selenophosphate + AMP + phosphate + 2 H(+). Synthesizes selenophosphate from selenide and ATP. The polypeptide is Selenide, water dikinase (Campylobacter jejuni subsp. jejuni serotype O:2 (strain ATCC 700819 / NCTC 11168)).